A 781-amino-acid polypeptide reads, in one-letter code: Beta-mannosyltransferase 4 (781 aa).

The Cytoplasmic segment spans residues 1-17 (MTKSYMPLFRSPRQFKK). A helical membrane pass occupies residues 18–38 (IYFILIPLILAVIILHVFFDG). Over 39-781 (FNKISEYSPT…EKEDDDDIEV (743 aa)) the chain is Extracellular. A coiled-coil region spans residues 640 to 733 (KLGDSEAAIK…AKDEDKNEDE (94 aa)). Basic and acidic residues-rich tracts occupy residues 663 to 728 (KAEK…KDED) and 736 to 750 (KEKN…KSEV). Positions 663–781 (KAEKEKAEKE…EKEDDDDIEV (119 aa)) are disordered. The segment covering 751–781 (EENGENTNEGGEDDGDGDGEEEKEDDDDIEV) has biased composition (acidic residues).

It belongs to the BMT family.

The protein resides in the membrane. Its function is as follows. Beta-mannosyltransferase involved in cell wall biosynthesis. Required for the elongation of beta-mannose chains on the acid-labile fraction of cell wall phosphopeptidomannan. This chain is Beta-mannosyltransferase 4 (BMT4), found in Candida albicans (strain SC5314 / ATCC MYA-2876) (Yeast).